We begin with the raw amino-acid sequence, 126 residues long: Large ribosomal subunit protein uL22 (126 aa).

The protein belongs to the universal ribosomal protein uL22 family. In terms of assembly, part of the 50S ribosomal subunit.

This protein binds specifically to 23S rRNA; its binding is stimulated by other ribosomal proteins, e.g. L4, L17, and L20. It is important during the early stages of 50S assembly. It makes multiple contacts with different domains of the 23S rRNA in the assembled 50S subunit and ribosome. Functionally, the globular domain of the protein is located near the polypeptide exit tunnel on the outside of the subunit, while an extended beta-hairpin is found that lines the wall of the exit tunnel in the center of the 70S ribosome. In Ruegeria sp. (strain TM1040) (Silicibacter sp.), this protein is Large ribosomal subunit protein uL22.